Consider the following 394-residue polypeptide: Elongation factor Tu, mitochondrial (394 aa).

Residues 10-204 (KPHCNIGTIG…AVDNYIPQPE (195 aa)) enclose the tr-type G domain. Residues 19-26 (GHVDHGKT) form a G1 region. 19–26 (GHVDHGKT) is a binding site for GTP. The segment at 60–64 (GITIS) is G2. The tract at residues 81–84 (DCPG) is G3. GTP contacts are provided by residues 81–85 (DCPGH) and 136–139 (NKVD). The tract at residues 136–139 (NKVD) is G4. The segment at 174 to 176 (SAL) is G5.

The protein belongs to the TRAFAC class translation factor GTPase superfamily. Classic translation factor GTPase family. EF-Tu/EF-1A subfamily.

The protein resides in the mitochondrion. In terms of biological role, this protein promotes the GTP-dependent binding of aminoacyl-tRNA to the A-site of ribosomes during protein biosynthesis. This chain is Elongation factor Tu, mitochondrial (TUFA), found in Reclinomonas americana.